Consider the following 343-residue polypeptide: Ribosomal RNA small subunit methyltransferase C (343 aa).

The protein belongs to the methyltransferase superfamily. RsmC family. Monomer.

Its subcellular location is the cytoplasm. The enzyme catalyses guanosine(1207) in 16S rRNA + S-adenosyl-L-methionine = N(2)-methylguanosine(1207) in 16S rRNA + S-adenosyl-L-homocysteine + H(+). Its function is as follows. Specifically methylates the guanine in position 1207 of 16S rRNA in the 30S particle. In Escherichia coli O157:H7, this protein is Ribosomal RNA small subunit methyltransferase C.